Reading from the N-terminus, the 256-residue chain is Small ribosomal subunit protein uS2 (256 aa).

Belongs to the universal ribosomal protein uS2 family.

This Acidiphilium cryptum (strain JF-5) protein is Small ribosomal subunit protein uS2.